The primary structure comprises 591 residues: Calnexin (591 aa).

An N-terminal signal peptide occupies residues 1–20 (MEGKWLLCLLLVLGTAAIQA). The Lumenal segment spans residues 21 to 482 (HDGHDDDMID…QMLEAAEERP (462 aa)). Ca(2+)-binding residues include S75 and D118. K138 is modified (N6-acetyllysine). C161 and C195 are joined by a disulfide. 4 residues coordinate an alpha-D-glucoside: Y165, K167, Y186, and D193. The tract at residues 261-347 (GNLLNDMTPP…EKPEDWDEDM (87 aa)) is disordered. The span at 275–320 (REIEDPEDRKPEDWDERPKIADPDAVKPDDWDEDAPSKIPDEEATK) shows a compositional bias: basic and acidic residues. The p domain (Extended arm) stretch occupies residues 277-410 (IEDPEDRKPE…RKIPNPDFFE (134 aa)). Repeat copies occupy residues 279 to 291 (DPEDRKPEDWDER), 296 to 308 (DPDAVKPDDWDED), 315 to 327 (DEEATKPEGWLDD), 334 to 346 (DPDAEKPEDWDED), and 349 to 359 (GEWEAPQIANP). 2 4 X approximate repeats regions span residues 279 to 346 (DPED…WDED) and 349 to 406 (GEWE…IPNP). Residues 324-347 (WLDDEPEYIPDPDAEKPEDWDEDM) show a composition bias toward acidic residues. An interaction with PPIB region spans residues 327–360 (DEPEYIPDPDAEKPEDWDEDMDGEWEAPQIANPK). A disulfide bond links C361 and C367. 3 consecutive repeat copies span residues 368-378 (GVWQRPMIDNP), 382-392 (GKWKPPMIDNP), and 396-406 (GIWKPRKIPNP). E426 lines the an alpha-D-glucoside pocket. D437 lines the Ca(2+) pocket. The chain crosses the membrane as a helical span at residues 483 to 503 (WLWVVYILTVALPVFLVILFC). 2 S-palmitoyl cysteine lipidation sites follow: C503 and C504. Residues 504-591 (CSGKKQSNAM…SPRNRKPRRE (88 aa)) lie on the Cytoplasmic side of the membrane. Residues 504–591 (CSGKKQSNAM…SPRNRKPRRE (88 aa)) are sufficient to mediate interaction with SGIP1. Basic and acidic residues predominate over residues 514–538 (EYKKTDAPQPDVKDEEGKEEEKNKG). The interval 514 to 591 (EYKKTDAPQP…SPRNRKPRRE (78 aa)) is disordered. Position 553 is a phosphoserine (S553). Positions 555 to 568 (AEEDGGTGSQDEED) are enriched in acidic residues. At T561 the chain carries Phosphothreonine. S563 is modified (phosphoserine; by MAPK3). A Phosphoserine modification is found at S582.

This sequence belongs to the calreticulin family. In terms of assembly, interacts with MAPK3/ERK1. Interacts with KCNH2. Associates with ribosomes. Interacts with SGIP1; involved in negative regulation of endocytosis. The palmitoylated form interacts with the ribosome-translocon complex component SSR1, promoting efficient folding of glycoproteins. Interacts with SERPINA2P/SERPINA2 and with the S and Z variants of SERPINA1. Interacts with PPIB. Interacts with ZNRF4. Interacts with SMIM22. Interacts with TMX2. Interacts with TMEM35A/NACHO and CHRNA7. Interacts with reticulophagy regulators RETREG2 and RETREG3. Interacts with DNM1L; may form part of a larger protein complex at the ER-mitochondrial interface during mitochondrial fission. Interacts with ADAM7. Post-translationally, phosphorylated at Ser-563 by MAPK3/ERK1. Phosphorylation by MAPK3/ERK1 increases its association with ribosomes. Palmitoylation by DHHC6 leads to the preferential localization to the perinuclear rough ER. It mediates the association of calnexin with the ribosome-translocon complex (RTC) which is required for efficient folding of glycosylated proteins. In terms of processing, ubiquitinated, leading to proteasomal degradation. Probably ubiquitinated by ZNRF4.

Its subcellular location is the endoplasmic reticulum membrane. The protein resides in the mitochondrion membrane. It is found in the melanosome membrane. Calcium-binding protein that interacts with newly synthesized monoglucosylated glycoproteins in the endoplasmic reticulum. It may act in assisting protein assembly and/or in the retention within the ER of unassembled protein subunits. It seems to play a major role in the quality control apparatus of the ER by the retention of incorrectly folded proteins. Associated with partial T-cell antigen receptor complexes that escape the ER of immature thymocytes, it may function as a signaling complex regulating thymocyte maturation. Additionally it may play a role in receptor-mediated endocytosis at the synapse. The sequence is that of Calnexin (Canx) from Rattus norvegicus (Rat).